A 219-amino-acid chain; its full sequence is RPA-interacting protein (219 aa).

Ser-18 is subject to Phosphoserine. The RIP-type zinc-finger motif lies at 137 to 212; it reads CPVCIKYNLR…PSLLMNCLTC (76 aa). Positions 164–180 are mediates nuclear export; that stretch reads STDLTEQKLRACLEENV.

In terms of assembly, interacts with the RPA1 subunit of RPA complex. In terms of processing, sumoylated; required for localization in the nuclear PML body and transport of RPA complex in PML body. Upon UV irradiation and during S phase, it is desumoylated, releasing RPA complex that is translocated to sites of DNA damage. Sumoylation takes place at different Lys residues.

The protein localises to the nucleus. In terms of biological role, mediates the import of RPA complex into the nucleus, possibly via some interaction with importin beta. Sumoylation mediates the localization of RPA complex into the PML body of the nucleus, thereby participating in RPA function in DNA metabolism. The sequence is that of RPA-interacting protein (Rpain) from Mus musculus (Mouse).